The chain runs to 191 residues: Guanylate kinase (191 aa).

The Guanylate kinase-like domain occupies 9–187 (GQLIVITGPS…SLIALETAIF (179 aa)). ATP is bound at residue 16–23 (GPSGVGKG).

This sequence belongs to the guanylate kinase family.

Its subcellular location is the cytoplasm. It carries out the reaction GMP + ATP = GDP + ADP. Functionally, essential for recycling GMP and indirectly, cGMP. The sequence is that of Guanylate kinase from Thermosynechococcus vestitus (strain NIES-2133 / IAM M-273 / BP-1).